Here is a 256-residue protein sequence, read N- to C-terminus: tRNA (guanine-N(7)-)-methyltransferase (256 aa).

Residues 1-25 (MVATGGQAQDQSQNQEPDVLNPTSA) are disordered. Residues G79, 102–103 (EI), 137–138 (NA), and L157 each bind S-adenosyl-L-methionine. D160 is a catalytic residue. 235-237 (SEE) provides a ligand contact to S-adenosyl-L-methionine.

Belongs to the class I-like SAM-binding methyltransferase superfamily. TrmB family.

The protein localises to the nucleus. The enzyme catalyses guanosine(46) in tRNA + S-adenosyl-L-methionine = N(7)-methylguanosine(46) in tRNA + S-adenosyl-L-homocysteine. Its pathway is tRNA modification; N(7)-methylguanine-tRNA biosynthesis. Functionally, catalyzes the formation of N(7)-methylguanine at position 46 (m7G46) in tRNA. This is tRNA (guanine-N(7)-)-methyltransferase from Drosophila simulans (Fruit fly).